Reading from the N-terminus, the 166-residue chain is Ribosome-binding factor A (166 aa).

A disordered region spans residues 122-166; that stretch reads HVADETDVEDSTDHEDDVTNSEDETKHVDIDTDSEEGTNTDGKAQ. Over residues 126 to 143 the composition is skewed to acidic residues; sequence ETDVEDSTDHEDDVTNSE.

Belongs to the RbfA family. In terms of assembly, monomer. Binds 30S ribosomal subunits, but not 50S ribosomal subunits or 70S ribosomes.

The protein localises to the cytoplasm. One of several proteins that assist in the late maturation steps of the functional core of the 30S ribosomal subunit. Associates with free 30S ribosomal subunits (but not with 30S subunits that are part of 70S ribosomes or polysomes). Required for efficient processing of 16S rRNA. May interact with the 5'-terminal helix region of 16S rRNA. In Pseudoalteromonas translucida (strain TAC 125), this protein is Ribosome-binding factor A.